A 187-amino-acid chain; its full sequence is Frequenin-1 (187 aa).

Residue Gly2 is the site of N-myristoyl glycine attachment. 4 consecutive EF-hand domains span residues 24–59 (EKEI…FPQG), 60–95 (DPSK…TSKG), 96–131 (NLDE…IYQM), and 143–178 (TPQK…DPRI). Asp73, Asn75, Asp77, Ser79, Glu84, Asp109, Asp111, Asp113, Tyr115, Glu120, Asp156, Asn158, Asp160, Lys162, and Glu167 together coordinate Ca(2+).

Belongs to the recoverin family. As to quaternary structure, in contrast to Frq2, does not interact with ric8a. As to expression, enriched in synapses, such as the motor nerve endings at neuromuscular junctions. In the embryo, highly expressed in the ventral ganglia.

It localises to the cytoplasm. Functionally, ca(2+)-dependent modulation of synaptic efficacy. Also plays a role in axon terminal morphology. The polypeptide is Frequenin-1 (Frq1) (Drosophila melanogaster (Fruit fly)).